The chain runs to 184 residues: UPF0179 protein Pcal_2106 (184 aa).

Residues 146 to 161 (GASSAGISQAPSRVPL) are compositionally biased toward low complexity. The tract at residues 146 to 184 (GASSAGISQAPSRVPLSKPPSKSPSPQKSSPRGPTSRLP) is disordered.

It belongs to the UPF0179 family.

The protein is UPF0179 protein Pcal_2106 of Pyrobaculum calidifontis (strain DSM 21063 / JCM 11548 / VA1).